The sequence spans 176 residues: Shikimate kinase (176 aa).

Position 14-19 (14-19 (GAGKST)) interacts with ATP. Ser18 contributes to the Mg(2+) binding site. Residues Asp36, Arg60, and Gly83 each contribute to the substrate site. Arg121 lines the ATP pocket. Residue Arg140 participates in substrate binding.

It belongs to the shikimate kinase family. In terms of assembly, monomer. Mg(2+) is required as a cofactor.

Its subcellular location is the cytoplasm. It catalyses the reaction shikimate + ATP = 3-phosphoshikimate + ADP + H(+). It participates in metabolic intermediate biosynthesis; chorismate biosynthesis; chorismate from D-erythrose 4-phosphate and phosphoenolpyruvate: step 5/7. In terms of biological role, catalyzes the specific phosphorylation of the 3-hydroxyl group of shikimic acid using ATP as a cosubstrate. The polypeptide is Shikimate kinase (Francisella philomiragia subsp. philomiragia (strain ATCC 25017 / CCUG 19701 / FSC 153 / O#319-036)).